A 371-amino-acid polypeptide reads, in one-letter code: Protein IQ-DOMAIN 7 (371 aa).

A disordered region spans residues 1-32; the sequence is MGGSGNWIRSLISNRKPVNDQQEKLSDKSSKK. The span at 17–29 shows a compositional bias: basic and acidic residues; sequence PVNDQQEKLSDKS. IQ domains follow at residues 93–121 and 122–144; these read REWA…AVVR and IQAI…CMQA. The segment at 125–141 is calmodulin-binding; that stretch reads IFRGRQVRKQAAVTLRC. Disordered regions lie at residues 285–308 and 327–371; these read SGMS…PVAF and LTQS…SQRS. 2 stretches are compositionally biased toward polar residues: residues 297–308 and 327–341; these read STSSTSQSPVAF and LTQS…SGLS.

It belongs to the IQD family. In terms of assembly, binds to multiple calmodulin (CaM) in the presence of Ca(2+) and CaM-like proteins.

It localises to the nucleus. Its subcellular location is the nucleus envelope. It is found in the cytoplasm. The protein localises to the cytoskeleton. In terms of biological role, may be involved in cooperative interactions with calmodulins or calmodulin-like proteins. Recruits calmodulin proteins to microtubules, thus being a potential scaffold in cellular signaling and trafficking. May associate with nucleic acids and regulate gene expression at the transcriptional or post-transcriptional level. This Arabidopsis thaliana (Mouse-ear cress) protein is Protein IQ-DOMAIN 7.